Reading from the N-terminus, the 81-residue chain is Protein Vpu (81 aa).

The Extracellular portion of the chain corresponds to 1 to 7; sequence MQSLEIV. Residues 8–28 form a helical membrane-spanning segment; sequence AIVELVVAAIIAIVVWTIVFI. At 29–81 the chain is on the cytoplasmic side; the sequence is EYRKILRQRKIDRLIDRIREREEDNGNESEGDQEELSALVEMGHHAPWNVDDL. The tract at residues 50 to 81 is disordered; sequence EEDNGNESEGDQEELSALVEMGHHAPWNVDDL. Over residues 53–63 the composition is skewed to acidic residues; sequence NGNESEGDQEE. A Phosphoserine; by host CK2 modification is found at Ser57.

It belongs to the HIV-1 VPU protein family. Homopentamer. Interacts with host CD4 and BRTC; these interactions induce proteasomal degradation of CD4. Interacts with host BST2; this interaction leads to the degradation of host BST2. Interacts with host FBXW11. Interacts with host AP1M1; this interaction plays a role in the mistrafficking and subsequent degradation of host BST2. Interacts with host RANBP2; this interaction allows Vpu to down-regulate host BLM sumoylation. Phosphorylated by host CK2. This phosphorylation is necessary for interaction with human BTRC and degradation of CD4.

Its subcellular location is the host membrane. Its activity is regulated as follows. Ion channel activity is inhibited by hexamethylene amiloride in vitro. Its function is as follows. Enhances virion budding by targeting host CD4 and Tetherin/BST2 to proteasome degradation. Degradation of CD4 prevents any unwanted premature interactions between viral Env and its host receptor CD4 in the endoplasmic reticulum. Degradation of antiretroviral protein Tetherin/BST2 is important for virion budding, as BST2 tethers new viral particles to the host cell membrane. Mechanistically, Vpu bridges either CD4 or BST2 to BTRC, a substrate recognition subunit of the Skp1/Cullin/F-box protein E3 ubiquitin ligase, induces their ubiquitination and subsequent proteasomal degradation. The alteration of the E3 ligase specificity by Vpu seems to promote the degradation of host IKBKB, leading to NF-kappa-B down-regulation and subsequent apoptosis. Acts as a viroporin that forms an oligomeric ion channel in membranes. Modulates the host DNA repair mechanisms to promote degradation of nuclear viral cDNA in cells that are already productively infected in order to suppress immune sensing and proviral hyper-integration (superinfection). Manipulates PML-NBs and modulates SUMOylation of host BLM protein thereby enhancing its DNA-end processing activity toward viral unintegrated linear DNA. Also inhibits RAD52-mediated homologous repair of viral cDNA, preventing the generation of dead-end circular forms of single copies of the long terminal repeat and permitting sustained nucleolytic attack. This Homo sapiens (Human) protein is Protein Vpu.